Reading from the N-terminus, the 170-residue chain is MKTQRDGHSLGWWSLVLLLLGLVMPLAIIAQVLSYKEAVLRAIDGINQRSSDANLYRLLDLDPRPTMDGDPDTPKPVSFTVKETVCPRTTQQSPEDCDFKKDGLVKRCMGTVTLNQARGSFDISCDKDNKRFALLGDFFRKAKEKIGKESKRIVQRIKDFLRNLVPRTES.

The first 30 residues, 1 to 30, serve as a signal peptide directing secretion; it reads MKTQRDGHSLGWWSLVLLLLGLVMPLAIIA. The propeptide at 31 to 131 is cathelin-like domain (CLD); that stretch reads QVLSYKEAVL…DISCDKDNKR (101 aa). Cystine bridges form between Cys-86/Cys-97 and Cys-108/Cys-125. The interval 150–162 is active core; sequence SKRIVQRIKDFLR.

The protein belongs to the cathelicidin family. As to quaternary structure, monomer, homodimer or homotrimer (in vitro). Oligomerizes as tetra- or hexamer in solution (in vitro). In terms of processing, proteolytically cleaved by proteinase PRTN3 into antibacterial peptide LL-37. Proteolytically cleaved by cathepsin CTSG and neutrophil elastase ELANE. Post-translationally, resistant to proteolytic degradation in solution, and when bound to both zwitterionic (mimicking mammalian membranes) and negatively charged membranes (mimicking bacterial membranes). After secretion onto the skin surface, the CAMP gene product is processed by a serine protease-dependent mechanism into multiple novel antimicrobial peptides distinct from and shorter than cathelicidin LL-37. These peptides show enhanced antimicrobial action, acquiring the ability to kill skin pathogens such as S.aureus, E.coli and C.albicans. These peptides have lost the ability to stimulate CXCL8/IL8 release from keratinocytes. The peptides act synergistically, killing bacteria at lower concentrations when present together, and maintain activity at increased salt condition.

Its subcellular location is the secreted. It localises to the vesicle. Antimicrobial protein that is an integral component of the innate immune system. Binds to bacterial lipopolysaccharides (LPS). Acts via neutrophil N-formyl peptide receptors to enhance the release of CXCL2. Postsecretory processing generates multiple cathelicidin antimicrobial peptides with various lengths which act as a topical antimicrobial defense in sweat on skin. The unprocessed precursor form, cathelicidin antimicrobial peptide, inhibits the growth of Gram-negative E.coli and E.aerogenes with efficiencies comparable to that of the mature peptide LL-37 (in vitro). Functionally, antimicrobial peptide that is an integral component of the innate immune system. Binds to bacterial lipopolysaccharides (LPS). Causes membrane permeabilization by forming transmembrane pores (in vitro). Causes lysis of E.coli. Exhibits antimicrobial activity against Gram-negative bacteria such as P.aeruginosa, S.typhimurium, E.aerogenes, E.coli and P.syringae, Gram-positive bacteria such as L.monocytogenes, S.epidermidis, S.pyogenes and S.aureus, as well as vancomycin-resistant enterococci (in vitro). Exhibits antimicrobial activity against methicillin-resistant S.aureus, P.mirabilis, and C.albicans in low-salt media, but not in media containing 100 mM NaCl (in vitro). Forms chiral supramolecular assemblies with quinolone signal (PQS) molecules of P.aeruginosa, which may lead to interference of bacterial quorum signaling and perturbance of bacterial biofilm formation. May form supramolecular fiber-like assemblies on bacterial membranes. Induces cytokine and chemokine producation as well as TNF/TNFA and CSF2/GMCSF production in normal human keratinocytes. Exhibits hemolytic activity against red blood cells. In terms of biological role, exhibits antimicrobial activity against E.coli and B.megaterium (in vitro). The chain is Cathelicidin antimicrobial peptide from Gorilla gorilla gorilla (Western lowland gorilla).